The sequence spans 2341 residues: Pecanex-like protein 1 (2341 aa).

The next 2 helical transmembrane spans lie at Ala28–Tyr50 and Met57–Leu74. The segment at Phe98–Arg163 is disordered. The N-linked (GlcNAc...) asparagine glycan is linked to Asn109. The segment covering Ser143–Arg163 has biased composition (polar residues). Asn215 is a glycosylation site (N-linked (GlcNAc...) asparagine). 3 disordered regions span residues His270–Pro294, Asp311–Glu331, and Asp344–Arg689. The segment covering His272–Gly282 has biased composition (basic residues). Composition is skewed to polar residues over residues Lys320 to Glu331 and Ile347 to Ser356. A glycan (N-linked (GlcNAc...) asparagine) is linked at Asn348. Over residues Ser370 to Gly388 the composition is skewed to low complexity. An N-linked (GlcNAc...) asparagine glycan is attached at Asn394. The segment covering Asn394–Gln404 has biased composition (polar residues). 3 stretches are compositionally biased toward basic and acidic residues: residues Lys430 to Ala455, His465 to Asn478, and Ser527 to Pro544. The span at Ala554–Ala569 shows a compositional bias: basic residues. The segment covering Gln605–Ser635 has biased composition (low complexity). An N-linked (GlcNAc...) asparagine glycan is attached at Asn702. The tract at residues Gln756–Arg834 is disordered. A compositionally biased stretch (low complexity) spans Leu814–Gln832. N-linked (GlcNAc...) asparagine glycosylation is found at Asn852 and Asn863. Transmembrane regions (helical) follow at residues Ile1003–Ile1025, Ile1032–Leu1049, and Ile1067–Ser1089. Asn1091 is a glycosylation site (N-linked (GlcNAc...) asparagine). A helical transmembrane segment spans residues Phe1110 to Leu1132. Asn1155 carries N-linked (GlcNAc...) asparagine glycosylation. Transmembrane regions (helical) follow at residues Leu1160–Tyr1182, Ile1194–Ser1213, Leu1266–Leu1288, and Val1295–Pro1312. N-linked (GlcNAc...) asparagine glycosylation is found at Asn1579, Asn1720, Asn1982, Asn2062, and Asn2072. Disordered regions lie at residues Asn2062–Arg2120 and Gly2217–His2237. 3 stretches are compositionally biased toward polar residues: residues Pro2069–Ile2078, Tyr2096–Val2114, and Gly2217–Ser2236. Residues Asn2234 and Asn2260 are each glycosylated (N-linked (GlcNAc...) asparagine).

It belongs to the pecanex family.

Its subcellular location is the membrane. In Homo sapiens (Human), this protein is Pecanex-like protein 1.